A 1291-amino-acid polypeptide reads, in one-letter code: DNA-directed RNA polymerase subunit beta' (1291 aa).

C60, C62, C75, and C78 together coordinate Zn(2+). Mg(2+) is bound by residues D535, D537, and D539. Positions 878, 954, 961, and 964 each coordinate Zn(2+).

It belongs to the RNA polymerase beta' chain family. The RNAP catalytic core consists of 2 alpha, 1 beta, 1 beta' and 1 omega subunit. When a sigma factor is associated with the core the holoenzyme is formed, which can initiate transcription. It depends on Mg(2+) as a cofactor. Zn(2+) is required as a cofactor.

The catalysed reaction is RNA(n) + a ribonucleoside 5'-triphosphate = RNA(n+1) + diphosphate. Functionally, DNA-dependent RNA polymerase catalyzes the transcription of DNA into RNA using the four ribonucleoside triphosphates as substrates. The sequence is that of DNA-directed RNA polymerase subunit beta' from Thermobifida fusca (strain YX).